We begin with the raw amino-acid sequence, 233 residues long: UPF0758 protein TTE0897 (233 aa).

In terms of domain architecture, MPN spans Ser108–Tyr230. His179, His181, and Asp192 together coordinate Zn(2+). The JAMM motif motif lies at His179–Asp192.

This sequence belongs to the UPF0758 family.

The chain is UPF0758 protein TTE0897 from Caldanaerobacter subterraneus subsp. tengcongensis (strain DSM 15242 / JCM 11007 / NBRC 100824 / MB4) (Thermoanaerobacter tengcongensis).